Consider the following 165-residue polypeptide: Crossover junction endodeoxyribonuclease RuvC (165 aa).

Catalysis depends on residues Asp7, Glu67, and Asp140. Positions 7, 67, and 140 each coordinate Mg(2+).

This sequence belongs to the RuvC family. In terms of assembly, homodimer which binds Holliday junction (HJ) DNA. The HJ becomes 2-fold symmetrical on binding to RuvC with unstacked arms; it has a different conformation from HJ DNA in complex with RuvA. In the full resolvosome a probable DNA-RuvA(4)-RuvB(12)-RuvC(2) complex forms which resolves the HJ. Requires Mg(2+) as cofactor.

It localises to the cytoplasm. It carries out the reaction Endonucleolytic cleavage at a junction such as a reciprocal single-stranded crossover between two homologous DNA duplexes (Holliday junction).. Functionally, the RuvA-RuvB-RuvC complex processes Holliday junction (HJ) DNA during genetic recombination and DNA repair. Endonuclease that resolves HJ intermediates. Cleaves cruciform DNA by making single-stranded nicks across the HJ at symmetrical positions within the homologous arms, yielding a 5'-phosphate and a 3'-hydroxyl group; requires a central core of homology in the junction. The consensus cleavage sequence is 5'-(A/T)TT(C/G)-3'. Cleavage occurs on the 3'-side of the TT dinucleotide at the point of strand exchange. HJ branch migration catalyzed by RuvA-RuvB allows RuvC to scan DNA until it finds its consensus sequence, where it cleaves and resolves the cruciform DNA. This is Crossover junction endodeoxyribonuclease RuvC from Caldanaerobacter subterraneus subsp. tengcongensis (strain DSM 15242 / JCM 11007 / NBRC 100824 / MB4) (Thermoanaerobacter tengcongensis).